The sequence spans 325 residues: Beta-ketoacyl-[acyl-carrier-protein] synthase III (325 aa).

Residues Cys-119 and His-252 contribute to the active site. Positions 253-257 (QANIR) are ACP-binding. The active site involves Asn-282.

This sequence belongs to the thiolase-like superfamily. FabH family. Homodimer.

The protein resides in the cytoplasm. It catalyses the reaction malonyl-[ACP] + acetyl-CoA + H(+) = 3-oxobutanoyl-[ACP] + CO2 + CoA. It functions in the pathway lipid metabolism; fatty acid biosynthesis. In terms of biological role, catalyzes the condensation reaction of fatty acid synthesis by the addition to an acyl acceptor of two carbons from malonyl-ACP. Catalyzes the first condensation reaction which initiates fatty acid synthesis and may therefore play a role in governing the total rate of fatty acid production. Possesses both acetoacetyl-ACP synthase and acetyl transacylase activities. Its substrate specificity determines the biosynthesis of branched-chain and/or straight-chain of fatty acids. The sequence is that of Beta-ketoacyl-[acyl-carrier-protein] synthase III from Verminephrobacter eiseniae (strain EF01-2).